A 117-amino-acid polypeptide reads, in one-letter code: Large ribosomal subunit protein uL18 (117 aa).

The protein belongs to the universal ribosomal protein uL18 family. Part of the 50S ribosomal subunit; part of the 5S rRNA/L5/L18/L25 subcomplex. Contacts the 5S and 23S rRNAs.

This is one of the proteins that bind and probably mediate the attachment of the 5S RNA into the large ribosomal subunit, where it forms part of the central protuberance. The protein is Large ribosomal subunit protein uL18 of Tolumonas auensis (strain DSM 9187 / NBRC 110442 / TA 4).